The primary structure comprises 41 residues: Large ribosomal subunit protein bL36 (41 aa).

The protein belongs to the bacterial ribosomal protein bL36 family.

The polypeptide is Large ribosomal subunit protein bL36 (Stenotrophomonas maltophilia (strain R551-3)).